A 442-amino-acid chain; its full sequence is Histidine--tRNA ligase (442 aa).

The protein belongs to the class-II aminoacyl-tRNA synthetase family. Homodimer.

Its subcellular location is the cytoplasm. The catalysed reaction is tRNA(His) + L-histidine + ATP = L-histidyl-tRNA(His) + AMP + diphosphate + H(+). The chain is Histidine--tRNA ligase from Helicobacter pylori (strain P12).